The following is a 488-amino-acid chain: MSERSVGIVATNYHTIEGEFQLEGGHTLKNIRLAYETYGNLNKEKSNAILVCHALTGDAHAAGRHSDDDKKPGWWDDIIGPGKALDTDRYFVLCSNVLGGCKGTTGPASLDPDTGRQYGITFPVITIRDMVNVQKRLIDHMGITTLFAVVGGSMGGMQTLQWCVAYPELVKKAVVIASTAVSSPQQIAFNEVGRNAIISDPDWNGGDYYEGEPPVNGLSTARMIAHITYLSDASMHEKFGRRLQQGESYKFDMSNDFQVGSYLKYQGDTFTGRFDANSYLYATKAVDYFDLSMNGSLAEGLKYVQAKMLVISITSDWLYSPYHSKKIVEGLTVKEHDVSYREIESSYGHDAFLLESGQINYVIHNFLTHTSVADVMTEKVATIREGASIDTAAKVMFEEALTHLPVVNENGCLVGIVTSWDISKAVALKCSKLENIMTRDVLTAFPDEPIVAAAKRMERHSISALPVVDEKNRLIGIIDSEDINRLIG.

Positions 47-355 constitute an AB hydrolase-1 domain; the sequence is NAILVCHALT…SYGHDAFLLE (309 aa). Serine 153 acts as the Nucleophile in catalysis. Arginine 222 is a binding site for substrate. Residues aspartate 316 and histidine 349 contribute to the active site. Aspartate 350 provides a ligand contact to substrate. CBS domains are found at residues 376 to 433 and 437 to 488; these read MTEK…CSKL and MTRD…RLIG.

It belongs to the AB hydrolase superfamily. MetX family. As to quaternary structure, homodimer.

It is found in the cytoplasm. The enzyme catalyses L-homoserine + acetyl-CoA = O-acetyl-L-homoserine + CoA. The protein operates within amino-acid biosynthesis; L-methionine biosynthesis via de novo pathway; O-acetyl-L-homoserine from L-homoserine: step 1/1. Transfers an acetyl group from acetyl-CoA to L-homoserine, forming acetyl-L-homoserine. This Methanococcoides burtonii (strain DSM 6242 / NBRC 107633 / OCM 468 / ACE-M) protein is Homoserine O-acetyltransferase.